A 188-amino-acid chain; its full sequence is Elongation factor P (188 aa).

Lysine 34 carries the post-translational modification N6-(3,6-diaminohexanoyl)-5-hydroxylysine.

This sequence belongs to the elongation factor P family. Post-translationally, is beta-lysylated on the epsilon-amino group of Lys-34 by the combined action of EpmA and EpmB, and then hydroxylated on the C5 position of the same residue by EpmC. Lysylation is critical for the stimulatory effect of EF-P on peptide-bond formation. The lysylation moiety would extend toward the peptidyltransferase center and stabilize the terminal 3-CCA end of the tRNA. The hydroxylation of the C5 position on Lys-34 would allow additional potential stabilizing hydrogen-bond interactions with the P-tRNA.

It localises to the cytoplasm. Its pathway is protein biosynthesis; polypeptide chain elongation. Involved in peptide bond synthesis. Alleviates ribosome stalling that occurs when 3 or more consecutive Pro residues or the sequence PPG is present in a protein, possibly by augmenting the peptidyl transferase activity of the ribosome. Modification of Lys-34 is required for alleviation. The protein is Elongation factor P of Salmonella arizonae (strain ATCC BAA-731 / CDC346-86 / RSK2980).